The primary structure comprises 120 residues: NAD(P)H-quinone oxidoreductase subunit 3 (120 aa).

The next 3 helical transmembrane spans lie at 10–30 (LLVFLIVCSLLPILALGASAL), 64–84 (MFALVFVIFDVETVFLYPWAV), and 89–109 (LGLLAFVEALIFIAILVVGLV).

It belongs to the complex I subunit 3 family. NDH-1 can be composed of about 15 different subunits; different subcomplexes with different compositions have been identified which probably have different functions.

Its subcellular location is the cellular thylakoid membrane. The catalysed reaction is a plastoquinone + NADH + (n+1) H(+)(in) = a plastoquinol + NAD(+) + n H(+)(out). It carries out the reaction a plastoquinone + NADPH + (n+1) H(+)(in) = a plastoquinol + NADP(+) + n H(+)(out). NDH-1 shuttles electrons from an unknown electron donor, via FMN and iron-sulfur (Fe-S) centers, to quinones in the respiratory and/or the photosynthetic chain. The immediate electron acceptor for the enzyme in this species is believed to be plastoquinone. Couples the redox reaction to proton translocation, and thus conserves the redox energy in a proton gradient. Cyanobacterial NDH-1 also plays a role in inorganic carbon-concentration. This Synechococcus sp. (strain JA-2-3B'a(2-13)) (Cyanobacteria bacterium Yellowstone B-Prime) protein is NAD(P)H-quinone oxidoreductase subunit 3.